A 430-amino-acid chain; its full sequence is Histidine--tRNA ligase (430 aa).

This sequence belongs to the class-II aminoacyl-tRNA synthetase family. Homodimer.

It is found in the cytoplasm. It catalyses the reaction tRNA(His) + L-histidine + ATP = L-histidyl-tRNA(His) + AMP + diphosphate + H(+). The chain is Histidine--tRNA ligase from Gloeothece citriformis (strain PCC 7424) (Cyanothece sp. (strain PCC 7424)).